Consider the following 174-residue polypeptide: Solute carrier family 2, facilitated glucose transporter member 4 (174 aa).

The Cytoplasmic portion of the chain corresponds to 1 to 19 (QQIGSEDGEPPQQRVTGTL). The tract at residues 2 to 8 (QIGSEDG) is interaction with SRFBP1. Serine 5 carries the post-translational modification Phosphoserine. Residues 20-40 (VLAVFSAVLGSLQFGYNIGVI) form a helical membrane-spanning segment. The Extracellular segment spans residues 41-76 (NAPQKVIEQSYNETWLGRQGPNGPGSIPPGTLTTLW). An N-linked (GlcNAc...) asparagine glycan is attached at asparagine 52. A helical transmembrane segment spans residues 77 to 97 (ALSVAIFSVGGMFSSFLLGII). The Cytoplasmic portion of the chain corresponds to 98–114 (SQWLGRKKAMLFNNTLA). Residues 115 to 135 (VLAGALMGLAKAAASYEMLIL) traverse the membrane as a helical segment. The Extracellular portion of the chain corresponds to 136–137 (GR). The chain crosses the membrane as a helical span at residues 138–158 (FLIGAYSGLASGLVPMYVGEI). Residues 159–166 (APTHLRGA) are Cytoplasmic-facing. Residues 167 to 174 (LGTLNQLA) traverse the membrane as a helical segment.

The protein belongs to the major facilitator superfamily. Sugar transporter (TC 2.A.1.1) family. Glucose transporter subfamily. Binds to DAXX. Interacts via its N-terminus with SRFBP1. Interacts with NDUFA9. Interacts with TRARG1; the interaction is required for proper SLC2A4 recycling after insulin stimulation. Post-translationally, sumoylated. In terms of processing, palmitoylated. Palmitoylation by ZDHHC7 controls the insulin-dependent translocation of GLUT4 to the plasma membrane.

It localises to the cell membrane. The protein localises to the endomembrane system. The protein resides in the cytoplasm. It is found in the perinuclear region. It catalyses the reaction D-glucose(out) = D-glucose(in). Its function is as follows. Insulin-regulated facilitative glucose transporter, which plays a key role in removal of glucose from circulation. Response to insulin is regulated by its intracellular localization: in the absence of insulin, it is efficiently retained intracellularly within storage compartments in muscle and fat cells. Upon insulin stimulation, translocates from these compartments to the cell surface where it transports glucose from the extracellular milieu into the cell. This Sus scrofa (Pig) protein is Solute carrier family 2, facilitated glucose transporter member 4.